The sequence spans 511 residues: Lysine--tRNA ligase (511 aa).

The Mg(2+) site is built by glutamate 421 and glutamate 428.

This sequence belongs to the class-II aminoacyl-tRNA synthetase family. As to quaternary structure, homodimer. Requires Mg(2+) as cofactor.

It is found in the cytoplasm. The enzyme catalyses tRNA(Lys) + L-lysine + ATP = L-lysyl-tRNA(Lys) + AMP + diphosphate. The protein is Lysine--tRNA ligase of Aeromonas hydrophila subsp. hydrophila (strain ATCC 7966 / DSM 30187 / BCRC 13018 / CCUG 14551 / JCM 1027 / KCTC 2358 / NCIMB 9240 / NCTC 8049).